The primary structure comprises 254 residues: Transmembrane protein 70, mitochondrial (254 aa).

Residues 1–78 (MLFLALGGPW…PVCWERGVRC (78 aa)) constitute a mitochondrion transit peptide. Residues 79-112 (SHTQLDKSEDGRLIYTGNLARTVFGVKCFSYSTS) lie on the Mitochondrial matrix side of the membrane. The helical transmembrane segment at 113-133 (LISLAFLPYIFAQNNVIFGSL) threads the bilayer. At 134 to 136 (PLQ) the chain is on the mitochondrial intermembrane side. The chain crosses the membrane as a helical span at residues 137–157 (ILFYGTIGSFTVITPALLHFL). Residues 158–254 (TKGYVIRLYH…SEKKQLKEEK (97 aa)) lie on the Mitochondrial matrix side of the membrane.

It belongs to the TMEM70 family. In terms of assembly, homooligomer. Interacts (homooligomer form) with ATP5MC1; this interaction facilitates the oligomer formation of subunit c/ATP5MC1 (c-ring) and the c-ring membrane insertion and also protects ATP5MC1 against intramitochondrial proteolysis. Interacts with the core subunits TMEM126B, NDUFAF1, ECSIT and ACAD9 of the MCIA complex. Interacts with ATP5MC3, TMEM242 and TIMMDC1.

It is found in the mitochondrion inner membrane. Scaffold protein that participates in the c-ring assembly of mitochondrial ATP synthase (F(1)F(0) ATP synthase or complex V) by facilitating the membrane insertion and oligomer formation of the subunit c/ATP5MC1 through its interaction. Therefore, participates in the early stage of mitochondrial ATP synthase biogenesis and also protects subunit c/ATP5MC1 against intramitochondrial proteolysis. In addition, binds the mitochondrial proton-transporting ATP synthase complexes I and may play a role in the stability of its membrane-bound subassemblies. The chain is Transmembrane protein 70, mitochondrial from Bos taurus (Bovine).